Consider the following 546-residue polypeptide: Chaperonin GroEL (546 aa).

Residues T30 to P33, K51, D87 to T91, G415, N479 to A481, and D495 each bind ATP. The segment at D527 to M546 is disordered. A compositionally biased stretch (gly residues) spans G536–M546.

It belongs to the chaperonin (HSP60) family. In terms of assembly, forms a cylinder of 14 subunits composed of two heptameric rings stacked back-to-back. Interacts with the co-chaperonin GroES.

The protein localises to the cytoplasm. The enzyme catalyses ATP + H2O + a folded polypeptide = ADP + phosphate + an unfolded polypeptide.. In terms of biological role, together with its co-chaperonin GroES, plays an essential role in assisting protein folding. The GroEL-GroES system forms a nano-cage that allows encapsulation of the non-native substrate proteins and provides a physical environment optimized to promote and accelerate protein folding. This chain is Chaperonin GroEL, found in Acidovorax sp. (strain JS42).